The primary structure comprises 399 residues: Acetate kinase (399 aa).

Asparagine 7 is a Mg(2+) binding site. Lysine 14 contacts ATP. Residue arginine 91 coordinates substrate. Aspartate 148 acts as the Proton donor/acceptor in catalysis. ATP contacts are provided by residues 208-212, 283-285, and 331-335; these read HLGNG, DFR, and GLGEN. Glutamate 384 provides a ligand contact to Mg(2+).

The protein belongs to the acetokinase family. In terms of assembly, homodimer. It depends on Mg(2+) as a cofactor. Requires Mn(2+) as cofactor.

The protein localises to the cytoplasm. The enzyme catalyses acetate + ATP = acetyl phosphate + ADP. The protein operates within metabolic intermediate biosynthesis; acetyl-CoA biosynthesis; acetyl-CoA from acetate: step 1/2. Functionally, catalyzes the formation of acetyl phosphate from acetate and ATP. Can also catalyze the reverse reaction. The polypeptide is Acetate kinase (Desulfitobacterium hafniense (strain DSM 10664 / DCB-2)).